We begin with the raw amino-acid sequence, 380 residues long: Homoserine O-succinyltransferase (380 aa).

One can recognise an AB hydrolase-1 domain in the interval 49-357; that stretch reads NAILICHALS…ESTHGHDAFL (309 aa). Ser-155 (nucleophile) is an active-site residue. Position 225 (Arg-225) interacts with substrate. Catalysis depends on residues Asp-320 and His-353. Residue Asp-354 coordinates substrate.

This sequence belongs to the AB hydrolase superfamily. MetX family. In terms of assembly, homodimer.

The protein localises to the cytoplasm. It carries out the reaction L-homoserine + succinyl-CoA = O-succinyl-L-homoserine + CoA. The protein operates within amino-acid biosynthesis; L-methionine biosynthesis via de novo pathway; O-succinyl-L-homoserine from L-homoserine: step 1/1. In terms of biological role, transfers a succinyl group from succinyl-CoA to L-homoserine, forming succinyl-L-homoserine. The sequence is that of Homoserine O-succinyltransferase from Laribacter hongkongensis (strain HLHK9).